Here is a 167-residue protein sequence, read N- to C-terminus: 2-C-methyl-D-erythritol 2,4-cyclodiphosphate synthase (167 aa).

Asp9 and His11 together coordinate a divalent metal cation. Residues 9–11 and 35–36 each bind 4-CDP-2-C-methyl-D-erythritol 2-phosphate; these read DVH and HS. His43 contacts a divalent metal cation. 4-CDP-2-C-methyl-D-erythritol 2-phosphate-binding positions include 57–59, 62–66, 133–136, Phe140, and Arg143; these read DIG, FPDTD, and TTTE.

It belongs to the IspF family. As to quaternary structure, homotrimer. A divalent metal cation is required as a cofactor.

It carries out the reaction 4-CDP-2-C-methyl-D-erythritol 2-phosphate = 2-C-methyl-D-erythritol 2,4-cyclic diphosphate + CMP. The protein operates within isoprenoid biosynthesis; isopentenyl diphosphate biosynthesis via DXP pathway; isopentenyl diphosphate from 1-deoxy-D-xylulose 5-phosphate: step 4/6. Its function is as follows. Involved in the biosynthesis of isopentenyl diphosphate (IPP) and dimethylallyl diphosphate (DMAPP), two major building blocks of isoprenoid compounds. Catalyzes the conversion of 4-diphosphocytidyl-2-C-methyl-D-erythritol 2-phosphate (CDP-ME2P) to 2-C-methyl-D-erythritol 2,4-cyclodiphosphate (ME-CPP) with a corresponding release of cytidine 5-monophosphate (CMP). In Glaesserella parasuis serovar 5 (strain SH0165) (Haemophilus parasuis), this protein is 2-C-methyl-D-erythritol 2,4-cyclodiphosphate synthase.